The primary structure comprises 77 residues: Conotoxin King-Kong 1 (77 aa).

Positions 1–22 are cleaved as a signal peptide; sequence MKLTCMMIVAVLFLTAWTFATA. Residues 23 to 49 constitute a propeptide that is removed on maturation; the sequence is DDSSNGLENLFSKAHHEMKNPEASKLN. 3 disulfide bridges follow: cysteine 52/cysteine 67, cysteine 59/cysteine 71, and cysteine 66/cysteine 76. Residue methionine 61 is modified to Methionine sulfoxide; partial.

The protein belongs to the conotoxin O1 superfamily. As to expression, expressed by the venom duct.

Its subcellular location is the secreted. This is Conotoxin King-Kong 1 from Conus textile (Cloth-of-gold cone).